Consider the following 151-residue polypeptide: UPF0178 protein Tcr_1995 (151 aa).

A disordered region spans residues 116-135; that stretch reads RSSGVDTGGPPPLNQKDRQA.

The protein belongs to the UPF0178 family.

The polypeptide is UPF0178 protein Tcr_1995 (Hydrogenovibrio crunogenus (strain DSM 25203 / XCL-2) (Thiomicrospira crunogena)).